The following is a 329-amino-acid chain: 4-hydroxythreonine-4-phosphate dehydrogenase (329 aa).

Residues His-136 and Thr-137 each coordinate substrate. Residues His-166, His-211, and His-266 each coordinate a divalent metal cation. 3 residues coordinate substrate: Lys-274, Asn-283, and Arg-292.

The protein belongs to the PdxA family. In terms of assembly, homodimer. Zn(2+) serves as cofactor. Mg(2+) is required as a cofactor. The cofactor is Co(2+).

The protein localises to the cytoplasm. The enzyme catalyses 4-(phosphooxy)-L-threonine + NAD(+) = 3-amino-2-oxopropyl phosphate + CO2 + NADH. It participates in cofactor biosynthesis; pyridoxine 5'-phosphate biosynthesis; pyridoxine 5'-phosphate from D-erythrose 4-phosphate: step 4/5. Its function is as follows. Catalyzes the NAD(P)-dependent oxidation of 4-(phosphooxy)-L-threonine (HTP) into 2-amino-3-oxo-4-(phosphooxy)butyric acid which spontaneously decarboxylates to form 3-amino-2-oxopropyl phosphate (AHAP). This chain is 4-hydroxythreonine-4-phosphate dehydrogenase, found in Escherichia coli O6:H1 (strain CFT073 / ATCC 700928 / UPEC).